The chain runs to 209 residues: Glutathione S-transferase 2 (209 aa).

Residues 1–81 form the GST N-terminal domain; the sequence is MLDFYYLPGS…YLCDQYGDED (81 aa). Glutathione is bound by residues serine 10, 51–53, and 65–67; these read RTI and ESR. Residues 88–209 form the GST C-terminal domain; that stretch reads DTIQRAIVNQ…SGAKEFLTYK (122 aa).

It belongs to the GST superfamily. Theta family. Homodimer.

It carries out the reaction RX + glutathione = an S-substituted glutathione + a halide anion + H(+). Functionally, conjugation of reduced glutathione to a wide number of exogenous and endogenous hydrophobic electrophiles. The polypeptide is Glutathione S-transferase 2 (GstD2) (Anopheles gambiae (African malaria mosquito)).